Here is a 664-residue protein sequence, read N- to C-terminus: MAIPDEFDIIVVGGGSTGCCIAGRLANLDDQNLTVALIEGGENNINNPWVYLPGVYPRNMRLDSKTATFYSSRPSKALNGRRAIVPCANILGGGSSINFLMYTRASASDYDDWESEGWSTDELLPLIKKIETYQRPCNNRDLHGFDGPIKVSFGNYTYPTCQDFLRAAESQGIPVVDDLEDFKTSHGAEHWLKWINRDLGRRSDSAHAYVHPTMRNKQSLFLITSTKCDKVIIEDGKAVAVRTVPMKPLNPKKPVSRTFRARKQIVISCGTISSPLVLQRSGIGAAHHLRSVGVKPIVDLPGVGENFQDHYCFFTPYYVKPDVPTFDDFVRGDPVAQKAAFDQWYSNKDGPLTTNGIEAGVKIRPTEEELATADEDFRRGYAEYFENKPDKPLMHYSVISGFFGDHTKIPNGKFMTMFHFLEYPFSRGFVRITSANPYDAPDFDPGFLNDERDLWPMVWAYKKSRETARRMESFAGEVTSHHPLFKVDSPARARDLDLETCSAYAGPKHLTANLYHGSWTVPIDKPTPKNDFHVTSNQVQLHSDIEYTEEDDEAIVNYIKEHTETTWHCLGTCSMAPREGSKIAPKGGVLDARLNVYGVQNLKVADLSVCPDNVGCNTYSTALTIGEKAATLVAEDLGYSGSDLDMTIPNFRLGTYEETGLARF.

Residue 8-39 (DIIVVGGGSTGCCIAGRLANLDDQNLTVALIE) coordinates FAD. The active-site Proton acceptor is the H568. The Microbody targeting signal signature appears at 662-664 (ARF).

It belongs to the GMC oxidoreductase family. Homooctamer. The cofactor is FAD.

The protein resides in the peroxisome matrix. It catalyses the reaction a primary alcohol + O2 = an aldehyde + H2O2. It functions in the pathway energy metabolism; methane degradation. In terms of biological role, catalyzes the oxidation of methanol to formaldehyde and hydrogen peroxide, the first step in the methanol utilization pathway of methylotrophic yeasts. The chain is Alcohol oxidase (MOX) from Pichia angusta (Yeast).